Consider the following 66-residue polypeptide: Probable Sec-independent protein translocase protein TatE (66 aa).

Residues 1–21 (MEGISITKLLVIAVLIVLLFG) form a helical membrane-spanning segment. Residues 46 to 66 (ETPAAKKSDGVEAAPRVENKE) form a disordered region.

The protein belongs to the TatA/E family. TatE subfamily.

It is found in the cell inner membrane. Its function is as follows. Part of the twin-arginine translocation (Tat) system that transports large folded proteins containing a characteristic twin-arginine motif in their signal peptide across membranes. TatE shares overlapping functions with TatA. This Edwardsiella ictaluri (strain 93-146) protein is Probable Sec-independent protein translocase protein TatE.